The chain runs to 777 residues: DNA repair helicase/translocase XPB-R (777 aa).

In terms of domain architecture, Helicase ATP-binding spans 212–416; the sequence is AASDGALRSG…DLFHLVGPKL (205 aa). 225 to 232 lines the ATP pocket; it reads LPCGSGKT. Residues 369 to 372 carry the DEVH box motif; the sequence is DEVH. In terms of domain architecture, Helicase C-terminal spans 484–631; that stretch reads IVKRHVAESS…GYTCSVTEFN (148 aa).

Belongs to the helicase family. RAD25/XPB subfamily.

The catalysed reaction is Couples ATP hydrolysis with the unwinding of duplex DNA by translocating in the 3'-5' direction.. It carries out the reaction ATP + H2O = ADP + phosphate + H(+). ATP-dependent 3'-5' DNA helicase/translocase; binds dsDNA rather than ssDNA, unzipping it in a translocase rather than classical helicase activity. Involved in nucleotide excision repair (NER) of damaged DNA. XPB-R is a paralog of XBP, but is not a component of the TFIIH basal transcription factor and is dispensable for RNA polymerase II transcription. The polypeptide is DNA repair helicase/translocase XPB-R (Trypanosoma brucei brucei (strain 927/4 GUTat10.1)).